A 264-amino-acid chain; its full sequence is 3-methyl-2-oxobutanoate hydroxymethyltransferase (264 aa).

2 residues coordinate Mg(2+): D42 and D81. Residues D42–S43, D81, and K110 contribute to the 3-methyl-2-oxobutanoate site. A Mg(2+)-binding site is contributed by E112. E179 (proton acceptor) is an active-site residue.

This sequence belongs to the PanB family. As to quaternary structure, homodecamer; pentamer of dimers. Mg(2+) serves as cofactor.

The protein localises to the cytoplasm. It catalyses the reaction 3-methyl-2-oxobutanoate + (6R)-5,10-methylene-5,6,7,8-tetrahydrofolate + H2O = 2-dehydropantoate + (6S)-5,6,7,8-tetrahydrofolate. It functions in the pathway cofactor biosynthesis; (R)-pantothenate biosynthesis; (R)-pantoate from 3-methyl-2-oxobutanoate: step 1/2. Catalyzes the reversible reaction in which hydroxymethyl group from 5,10-methylenetetrahydrofolate is transferred onto alpha-ketoisovalerate to form ketopantoate. This is 3-methyl-2-oxobutanoate hydroxymethyltransferase from Francisella tularensis subsp. tularensis (strain FSC 198).